The following is a 446-amino-acid chain: Xanthone prenyltransferase A (446 aa).

Dimethylallyl diphosphate contacts are provided by Arg113, Lys199, Tyr201, Arg263, Lys265, Tyr267, Tyr369, and Tyr440.

It belongs to the tryptophan dimethylallyltransferase family.

It functions in the pathway secondary metabolite biosynthesis. In terms of biological role, xanthone prenyltransferase involved in the conversion of monodictyphenone to the prenyl xanthones such as emericellin, shamixanthone and epishamixanthone. Monodictyphenone is first converted to variecoxanthone A via a paeciloxanthone intermediate by the consecutive actions of the FAD-dependent monooxygenase mdpD and the xanthone prenyltransferase xptB. XptB catalyzes regular O-prenylation at the hydroxy group of C-7 of the xanthone ring. Variecoxanthone A is further prenylated to emericellin by xptA before being reduced to shamixanthone and epishamixanthone by the dehydrogenase xptC. In Emericella nidulans (strain FGSC A4 / ATCC 38163 / CBS 112.46 / NRRL 194 / M139) (Aspergillus nidulans), this protein is Xanthone prenyltransferase A.